A 55-amino-acid chain; its full sequence is UPF0391 membrane protein RALTA_A0099 (55 aa).

A run of 2 helical transmembrane segments spans residues 5–25 (ALVF…GIAA) and 30–50 (IAKI…VMGL).

This sequence belongs to the UPF0391 family.

The protein resides in the cell membrane. The polypeptide is UPF0391 membrane protein RALTA_A0099 (Cupriavidus taiwanensis (strain DSM 17343 / BCRC 17206 / CCUG 44338 / CIP 107171 / LMG 19424 / R1) (Ralstonia taiwanensis (strain LMG 19424))).